The sequence spans 610 residues: Menin (610 aa).

Residues 214–390 (GVAERSWLYL…SLLEAGEERP (177 aa)) form an interaction with FANCD2 region. The disordered stretch occupies residues 460–552 (REAEAAEAEE…SPPPEGPVLT (93 aa)). The segment covering 484–500 (RRESKPEEPPPPKKPAL) has biased composition (basic and acidic residues). Phosphoserine occurs at positions 487 and 543. A Phosphothreonine modification is found at threonine 594.

Component of the MLL-HCF complex, at least composed of KMT2A/MLL1, MEN1, ASH2L, RBBP5, DPY30, WDR5, HCFC1 and HCFC2. Component of the menin-associated histone methyltransferase complex, at least composed of KMT2B/MLL4, MEN1, ASH2L, RBBP5, DPY30 and WDR5. Interacts with POLR2B. Interacts with POLR2A phosphorylated at 'Ser-5', but not with the unphosphorylated, nor 'Ser-2' phosphorylated POLR2A forms. Interacts with FANCD2 and DBF4. Interacts with JUND (via MBM motif); inhibits the interaction of JUND with MAPK10 and the phosphorylation of JUND by MAP kinases MAPK8 and MAPK10. Interacts with SMAD3, but not with SMAD2, nor SMAD4. Directly interacts with NFKB1, NFKB2 and RELA. Interacts with KMT2A (via MBM motif). The KMT2A-MEN1 complex interacts with PSIP1 with a greater affinity as MEN1 enhances interaction of KMT2A with PSIP1. Interacts with the fusion protein KMT2A-MLLT3. As to expression, ubiquitous.

It is found in the nucleus. Its function is as follows. Essential component of a MLL/SET1 histone methyltransferase (HMT) complex, a complex that specifically methylates 'Lys-4' of histone H3 (H3K4). Functions as a transcriptional regulator. Binds to the TERT promoter and represses telomerase expression. Plays a role in TGFB1-mediated inhibition of cell-proliferation, possibly regulating SMAD3 transcriptional activity. Represses JUND-mediated transcriptional activation on AP1 sites, as well as that mediated by NFKB subunit RELA. Positively regulates HOXC8 and HOXC6 gene expression. May be involved in normal hematopoiesis through the activation of HOXA9 expression. May be involved in DNA repair. The chain is Menin (MEN1) from Homo sapiens (Human).